The sequence spans 459 residues: Sorting nexin-8 (459 aa).

Residues Met-1 to Gln-37 form a disordered region. A PX domain is found at Ala-68–Asp-176. Positions 104, 130, and 143 each coordinate a 1,2-diacyl-sn-glycero-3-phospho-(1D-myo-inositol-3-phosphate). Thr-446 is subject to Phosphothreonine. A Phosphoserine modification is found at Ser-450.

This sequence belongs to the sorting nexin family.

The protein resides in the early endosome membrane. Its function is as follows. May be involved in several stages of intracellular trafficking. May play a role in intracellular protein transport from early endosomes to the trans-Golgi network. The sequence is that of Sorting nexin-8 (Snx8) from Mus musculus (Mouse).